The chain runs to 275 residues: Orotidine 5'-phosphate decarboxylase (275 aa).

Residue K101 is the Proton donor of the active site.

It belongs to the OMP decarboxylase family. Type 2 subfamily.

The enzyme catalyses orotidine 5'-phosphate + H(+) = UMP + CO2. The protein operates within pyrimidine metabolism; UMP biosynthesis via de novo pathway; UMP from orotate: step 2/2. The protein is Orotidine 5'-phosphate decarboxylase of Leptospira interrogans serogroup Icterohaemorrhagiae serovar Lai (strain 56601).